Here is a 358-residue protein sequence, read N- to C-terminus: 3-dehydroquinate synthase (358 aa).

Residues 75-80 (SGEGSK), 109-113 (GVLGD), 133-134 (TT), Lys146, and Lys155 each bind NAD(+). Zn(2+)-binding residues include Glu188, His245, and His262.

It belongs to the sugar phosphate cyclases superfamily. Dehydroquinate synthase family. Requires Co(2+) as cofactor. Zn(2+) is required as a cofactor. NAD(+) serves as cofactor.

Its subcellular location is the cytoplasm. It catalyses the reaction 7-phospho-2-dehydro-3-deoxy-D-arabino-heptonate = 3-dehydroquinate + phosphate. It functions in the pathway metabolic intermediate biosynthesis; chorismate biosynthesis; chorismate from D-erythrose 4-phosphate and phosphoenolpyruvate: step 2/7. Catalyzes the conversion of 3-deoxy-D-arabino-heptulosonate 7-phosphate (DAHP) to dehydroquinate (DHQ). In Methylacidiphilum infernorum (isolate V4) (Methylokorus infernorum (strain V4)), this protein is 3-dehydroquinate synthase.